Here is a 232-residue protein sequence, read N- to C-terminus: Secreted LysM effector Mg3LysM (232 aa).

Residues 1–16 (MQNIFLAATLLGAAFA) form the signal peptide. Residues 47-91 (TNYTVKAGDTLGAIAKQYNSGVCDIAKVNGIDNPDYIKPDQVLSI) form the LysM 1 domain. N-linked (GlcNAc...) asparagine glycans are attached at residues Asn48, Asn100, Asn138, Asn195, Asn209, and Asn227. 2 LysM domains span residues 120-165 (STYT…VINT) and 177-221 (GTYV…IIIL).

Belongs to the secreted LysM effector family.

Functionally, secreted effector that enables the plant pathogenic fungus to manipulate host defenses for successful infection. Binds chitin fragments and blocks the activation of chitin-induced plant defense responses. Protects fungal hyphae against hydrolytic plant enzymes. In Zymoseptoria tritici (strain CBS 115943 / IPO323) (Speckled leaf blotch fungus), this protein is Secreted LysM effector Mg3LysM.